Here is a 427-residue protein sequence, read N- to C-terminus: Serine--tRNA ligase (427 aa).

Residue 230 to 232 coordinates L-serine; that stretch reads TSE. 261 to 263 contributes to the ATP binding site; that stretch reads RSE. Glutamate 284 contributes to the L-serine binding site. ATP is bound at residue 348–351; the sequence is EISS. Position 384 (serine 384) interacts with L-serine.

The protein belongs to the class-II aminoacyl-tRNA synthetase family. Type-1 seryl-tRNA synthetase subfamily. Homodimer. The tRNA molecule binds across the dimer.

The protein resides in the cytoplasm. It catalyses the reaction tRNA(Ser) + L-serine + ATP = L-seryl-tRNA(Ser) + AMP + diphosphate + H(+). It carries out the reaction tRNA(Sec) + L-serine + ATP = L-seryl-tRNA(Sec) + AMP + diphosphate + H(+). It participates in aminoacyl-tRNA biosynthesis; selenocysteinyl-tRNA(Sec) biosynthesis; L-seryl-tRNA(Sec) from L-serine and tRNA(Sec): step 1/1. Catalyzes the attachment of serine to tRNA(Ser). Is also able to aminoacylate tRNA(Sec) with serine, to form the misacylated tRNA L-seryl-tRNA(Sec), which will be further converted into selenocysteinyl-tRNA(Sec). The chain is Serine--tRNA ligase from Desulforapulum autotrophicum (strain ATCC 43914 / DSM 3382 / VKM B-1955 / HRM2) (Desulfobacterium autotrophicum).